A 213-amino-acid polypeptide reads, in one-letter code: Leucyl/phenylalanyl-tRNA--protein transferase (213 aa).

This sequence belongs to the L/F-transferase family.

The protein localises to the cytoplasm. It carries out the reaction N-terminal L-lysyl-[protein] + L-leucyl-tRNA(Leu) = N-terminal L-leucyl-L-lysyl-[protein] + tRNA(Leu) + H(+). It catalyses the reaction N-terminal L-arginyl-[protein] + L-leucyl-tRNA(Leu) = N-terminal L-leucyl-L-arginyl-[protein] + tRNA(Leu) + H(+). The catalysed reaction is L-phenylalanyl-tRNA(Phe) + an N-terminal L-alpha-aminoacyl-[protein] = an N-terminal L-phenylalanyl-L-alpha-aminoacyl-[protein] + tRNA(Phe). Its function is as follows. Functions in the N-end rule pathway of protein degradation where it conjugates Leu, Phe and, less efficiently, Met from aminoacyl-tRNAs to the N-termini of proteins containing an N-terminal arginine or lysine. This Campylobacter lari (strain RM2100 / D67 / ATCC BAA-1060) protein is Leucyl/phenylalanyl-tRNA--protein transferase.